We begin with the raw amino-acid sequence, 592 residues long: Arginine--tRNA ligase (592 aa).

Residues 112–122 carry the 'HIGH' region motif; sequence VNPNKELHVGH.

The protein belongs to the class-I aminoacyl-tRNA synthetase family. In terms of assembly, monomer.

It is found in the cytoplasm. The enzyme catalyses tRNA(Arg) + L-arginine + ATP = L-arginyl-tRNA(Arg) + AMP + diphosphate. The sequence is that of Arginine--tRNA ligase from Thermus thermophilus (strain ATCC BAA-163 / DSM 7039 / HB27).